Reading from the N-terminus, the 435-residue chain is Eukaryotic peptide chain release factor subunit 1-2 (435 aa).

Ala-2 carries the N-acetylalanine modification.

This sequence belongs to the eukaryotic release factor 1 family. Heterodimer of two subunits, one of which binds GTP. Interacts with OR.

Its subcellular location is the cytoplasm. Directs the termination of nascent peptide synthesis (translation) in response to the termination codons UAA, UAG and UGA. Modulates plant growth and development. This chain is Eukaryotic peptide chain release factor subunit 1-2, found in Brassica oleracea var. botrytis (Cauliflower).